The following is a 704-amino-acid chain: Elongation factor G (704 aa).

A tr-type G domain is found at 10-290 (NKVRNIGIMA…AVIDYLPSPL (281 aa)). GTP contacts are provided by residues 19-26 (AHIDAGKT), 83-87 (DTPGH), and 137-140 (NKMD).

This sequence belongs to the TRAFAC class translation factor GTPase superfamily. Classic translation factor GTPase family. EF-G/EF-2 subfamily.

The protein resides in the cytoplasm. Its function is as follows. Catalyzes the GTP-dependent ribosomal translocation step during translation elongation. During this step, the ribosome changes from the pre-translocational (PRE) to the post-translocational (POST) state as the newly formed A-site-bound peptidyl-tRNA and P-site-bound deacylated tRNA move to the P and E sites, respectively. Catalyzes the coordinated movement of the two tRNA molecules, the mRNA and conformational changes in the ribosome. This chain is Elongation factor G, found in Clavibacter michiganensis subsp. michiganensis (strain NCPPB 382).